The following is a 268-amino-acid chain: 3-deoxy-manno-octulosonate cytidylyltransferase (268 aa).

The protein belongs to the KdsB family.

The protein resides in the cytoplasm. It catalyses the reaction 3-deoxy-alpha-D-manno-oct-2-ulosonate + CTP = CMP-3-deoxy-beta-D-manno-octulosonate + diphosphate. The protein operates within nucleotide-sugar biosynthesis; CMP-3-deoxy-D-manno-octulosonate biosynthesis; CMP-3-deoxy-D-manno-octulosonate from 3-deoxy-D-manno-octulosonate and CTP: step 1/1. It participates in bacterial outer membrane biogenesis; lipopolysaccharide biosynthesis. Functionally, activates KDO (a required 8-carbon sugar) for incorporation into bacterial lipopolysaccharide in Gram-negative bacteria. The chain is 3-deoxy-manno-octulosonate cytidylyltransferase from Psychrobacter cryohalolentis (strain ATCC BAA-1226 / DSM 17306 / VKM B-2378 / K5).